The following is a 544-amino-acid chain: Chaperonin GroEL (544 aa).

Residues 30 to 33 (TLGP), Lys-51, 87 to 91 (DGTTT), Gly-415, and Asp-495 contribute to the ATP site.

The protein belongs to the chaperonin (HSP60) family. In terms of assembly, forms a cylinder of 14 subunits composed of two heptameric rings stacked back-to-back. Interacts with the co-chaperonin GroES.

It is found in the cytoplasm. It carries out the reaction ATP + H2O + a folded polypeptide = ADP + phosphate + an unfolded polypeptide.. Together with its co-chaperonin GroES, plays an essential role in assisting protein folding. The GroEL-GroES system forms a nano-cage that allows encapsulation of the non-native substrate proteins and provides a physical environment optimized to promote and accelerate protein folding. This is Chaperonin GroEL from Bartonella bacilliformis (strain ATCC 35685 / KC583 / Herrer 020/F12,63).